Reading from the N-terminus, the 105-residue chain is Small ribosomal subunit protein uS10 (105 aa).

This sequence belongs to the universal ribosomal protein uS10 family. As to quaternary structure, part of the 30S ribosomal subunit.

Involved in the binding of tRNA to the ribosomes. This is Small ribosomal subunit protein uS10 from Synechocystis sp. (strain ATCC 27184 / PCC 6803 / Kazusa).